Here is a 389-residue protein sequence, read N- to C-terminus: tRNA-specific 2-thiouridylase MnmA (389 aa).

Residues 35-42 (GMSGGVDS) and M61 each bind ATP. Residues 121–123 (NPD) are interaction with target base in tRNA. C126 serves as the catalytic Nucleophile. Cysteines 126 and 223 form a disulfide. G151 is a binding site for ATP. An interaction with tRNA region spans residues 173 to 175 (KDQ). C223 acts as the Cysteine persulfide intermediate in catalysis. Residues 335-336 (RY) form an interaction with tRNA region.

It belongs to the MnmA/TRMU family.

It localises to the cytoplasm. It carries out the reaction S-sulfanyl-L-cysteinyl-[protein] + uridine(34) in tRNA + AH2 + ATP = 2-thiouridine(34) in tRNA + L-cysteinyl-[protein] + A + AMP + diphosphate + H(+). Functionally, catalyzes the 2-thiolation of uridine at the wobble position (U34) of tRNA, leading to the formation of s(2)U34. The protein is tRNA-specific 2-thiouridylase MnmA of Actinobacillus pleuropneumoniae serotype 5b (strain L20).